The following is a 459-amino-acid chain: Argininosuccinate lyase (459 aa).

Belongs to the lyase 1 family. Argininosuccinate lyase subfamily.

Its subcellular location is the cytoplasm. It carries out the reaction 2-(N(omega)-L-arginino)succinate = fumarate + L-arginine. It functions in the pathway amino-acid biosynthesis; L-arginine biosynthesis; L-arginine from L-ornithine and carbamoyl phosphate: step 3/3. The sequence is that of Argininosuccinate lyase from Geobacillus thermodenitrificans (strain NG80-2).